The chain runs to 546 residues: Chaperonin GroEL (546 aa).

ATP-binding positions include 30-33 (TLGP), K51, 87-91 (DGTTT), G415, 479-481 (NAA), and D495. The segment at 527–546 (EEKPDVSASSGGMGGMGGMM) is disordered. The segment covering 537–546 (GGMGGMGGMM) has biased composition (gly residues).

It belongs to the chaperonin (HSP60) family. As to quaternary structure, forms a cylinder of 14 subunits composed of two heptameric rings stacked back-to-back. Interacts with the co-chaperonin GroES.

It is found in the cytoplasm. The catalysed reaction is ATP + H2O + a folded polypeptide = ADP + phosphate + an unfolded polypeptide.. Together with its co-chaperonin GroES, plays an essential role in assisting protein folding. The GroEL-GroES system forms a nano-cage that allows encapsulation of the non-native substrate proteins and provides a physical environment optimized to promote and accelerate protein folding. This chain is Chaperonin GroEL, found in Baumannia cicadellinicola subsp. Homalodisca coagulata.